Reading from the N-terminus, the 325-residue chain is Fe-S cluster assembly protein DRE2 (325 aa).

Positions 1–169 are N-terminal SAM-like domain; sequence MTLGDRLGLI…KKKDAGNNEQ (169 aa). Residues 170–222 form a linker region; sequence VVKLSVEDVEDDLDDDPEVSNELLSKAKFFNSLSLNQDAEIDENNLIKSTDGD. The [2Fe-2S] cluster site is built by Cys-229, Cys-240, Cys-243, and Cys-245. Residues 229–245 form a fe-S binding site A region; sequence CGKTNTKKRRACKDCTC. [4Fe-4S] cluster is bound by residues Cys-288, Cys-291, Cys-299, and Cys-302. 2 short sequence motifs (cx2C motif) span residues 288–291 and 299–302; these read CGSC and CSGC. Residues 288–302 form a fe-S binding site B region; that stretch reads CGSCSLGDAFRCSGC.

It belongs to the anamorsin family. In terms of assembly, monomer. Interacts with TAH18. Interacts with MIA40. [2Fe-2S] cluster serves as cofactor. It depends on [4Fe-4S] cluster as a cofactor.

It localises to the cytoplasm. The protein localises to the mitochondrion intermembrane space. In terms of biological role, component of the cytosolic iron-sulfur (Fe-S) protein assembly (CIA) machinery required for the maturation of extramitochondrial Fe-S proteins. Part of an electron transfer chain functioning in an early step of cytosolic Fe-S biogenesis, facilitating the de novo assembly of a [4Fe-4S] cluster on the scaffold complex CFD1-NBP35. Electrons are transferred to DRE2 from NADPH via the FAD- and FMN-containing protein TAH18. TAH18-DRE2 are also required for the assembly of the diferric tyrosyl radical cofactor of ribonucleotide reductase (RNR), probably by providing electrons for reduction during radical cofactor maturation in the catalytic small subunit RNR2. The protein is Fe-S cluster assembly protein DRE2 of Vanderwaltozyma polyspora (strain ATCC 22028 / DSM 70294 / BCRC 21397 / CBS 2163 / NBRC 10782 / NRRL Y-8283 / UCD 57-17) (Kluyveromyces polysporus).